A 268-amino-acid chain; its full sequence is Ethylene-responsive transcription factor ERN1 (268 aa).

Over residues 1-21 (MEIQFQQPNMQNQKAGISVTN) the composition is skewed to polar residues. Positions 1-36 (MEIQFQQPNMQNQKAGISVTNKGGKFKGRNRNSNNT) are disordered. The AP2/ERF DNA-binding region spans 38–95 (KFVGVRQRPSGRWVAEIKDTTQKIRMWLGTFETAEEAARAYDEAACLLRGSNTRTNFI). Residues 114-154 (NRKGDKKQEDGAVASAPSNSKTTISNTSTITSNDDNKESTL) are disordered. Residues 131–146 (SNSKTTISNTSTITSN) are compositionally biased toward low complexity.

The protein belongs to the AP2/ERF transcription factor family. ERF subfamily. Expressed in roots, root hairs and leaves. Expressed in root epidermis and root hairs.

Its subcellular location is the nucleus. In terms of biological role, transcription factor involved in symbiotic nodule signaling in response to rhizobial Nod factors (NFs). Binds to the GCC-box (NF-responsive box) of ENOD11 promoter. Acts as a transcriptional activator of NF-responsive box-containing target gene promoters in root hairs. Functions as a transcriptional regulator required for root infection by symbiotic rhizobia, infection thread (IT) formation and maintenance, and nodule development. Necessary for NF-induced gene expression and spontaneous nodulation activated by CCAMK. Functions downstream of CCAMK to activate nodulation gene expression. Involved in early stages of root nodule development. Functions redundantly with ERN2. Is essential with ERN2 for the initiation of root hair infection, and nodule organogenesis and development. Required for accurate expression of the NF signaling genes ENOD11 and ENOD12. The protein is Ethylene-responsive transcription factor ERN1 of Medicago truncatula (Barrel medic).